The chain runs to 419 residues: UDP-N-acetylglucosamine 1-carboxyvinyltransferase (419 aa).

22-23 (KN) provides a ligand contact to phosphoenolpyruvate. A UDP-N-acetyl-alpha-D-glucosamine-binding site is contributed by Arg-91. Cys-115 functions as the Proton donor in the catalytic mechanism. Position 115 is a 2-(S-cysteinyl)pyruvic acid O-phosphothioketal (Cys-115). UDP-N-acetyl-alpha-D-glucosamine contacts are provided by residues 120–124 (RPVDL), 160–163 (KVSV), Asp-305, and Val-327.

Belongs to the EPSP synthase family. MurA subfamily.

The protein resides in the cytoplasm. It carries out the reaction phosphoenolpyruvate + UDP-N-acetyl-alpha-D-glucosamine = UDP-N-acetyl-3-O-(1-carboxyvinyl)-alpha-D-glucosamine + phosphate. The protein operates within cell wall biogenesis; peptidoglycan biosynthesis. Its function is as follows. Cell wall formation. Adds enolpyruvyl to UDP-N-acetylglucosamine. The chain is UDP-N-acetylglucosamine 1-carboxyvinyltransferase from Escherichia fergusonii (strain ATCC 35469 / DSM 13698 / CCUG 18766 / IAM 14443 / JCM 21226 / LMG 7866 / NBRC 102419 / NCTC 12128 / CDC 0568-73).